The sequence spans 201 residues: FMN-dependent NADH:quinone oxidoreductase (201 aa).

FMN is bound by residues serine 10, 16 to 18 (SQS), 96 to 99 (MYNF), and 140 to 143 (SRGG).

The protein belongs to the azoreductase type 1 family. As to quaternary structure, homodimer. The cofactor is FMN.

It carries out the reaction 2 a quinone + NADH + H(+) = 2 a 1,4-benzosemiquinone + NAD(+). The catalysed reaction is N,N-dimethyl-1,4-phenylenediamine + anthranilate + 2 NAD(+) = 2-(4-dimethylaminophenyl)diazenylbenzoate + 2 NADH + 2 H(+). Functionally, quinone reductase that provides resistance to thiol-specific stress caused by electrophilic quinones. Its function is as follows. Also exhibits azoreductase activity. Catalyzes the reductive cleavage of the azo bond in aromatic azo compounds to the corresponding amines. In Escherichia coli O6:K15:H31 (strain 536 / UPEC), this protein is FMN-dependent NADH:quinone oxidoreductase.